Reading from the N-terminus, the 617-residue chain is Protein AsmA (617 aa).

Residues 1 to 3 (MRR) are Cytoplasmic-facing. The helical transmembrane segment at 4–24 (FLTTLMILLVVLVAGLSALVL) threads the bilayer. At 25 to 617 (LVNPNDFRDY…KDVKKLLEKM (593 aa)) the chain is on the periplasmic side. Residues 302-319 (TANGENGAAQQGQSQSTL) are compositionally biased toward polar residues. A disordered region spans residues 302 to 321 (TANGENGAAQQGQSQSTLPR).

The protein belongs to the AsmA family.

The protein resides in the cell inner membrane. Could be involved in the assembly of outer membrane proteins. May indirectly influence the assembly of outer membrane proteins, potentially by altering outer membrane fluidity. Inhibits the assembly of mutant forms of outer membrane protein F (OmpF). The sequence is that of Protein AsmA from Escherichia coli (strain K12).